A 268-amino-acid chain; its full sequence is Interleukin-1 beta (268 aa).

The propeptide occupies 1–116; sequence MATVPELNCE…WDDDDLLVCD (116 aa).

The protein belongs to the IL-1 family. Monomer. In its precursor form, weakly interacts with full-length MEFV; the mature cytokine does not interact at all. Interacts with integrins ITGAV:ITGBV and ITGA5:ITGB1; integrin-binding is required for IL1B signaling. Interacts with cargo receptor TMED10; the interaction is direct and is required for the secretion of IL1B mature form. Interacts with HSP90AB1; the interaction facilitates cargo translocation into the ERGIC. Interacts with HSP90B1; the interaction facilitates cargo translocation into the ERGIC.

Its subcellular location is the cytoplasm. It localises to the cytosol. The protein resides in the secreted. The protein localises to the lysosome. It is found in the extracellular exosome. Its function is as follows. Potent pro-inflammatory cytokine. Initially discovered as the major endogenous pyrogen, induces prostaglandin synthesis, neutrophil influx and activation, T-cell activation and cytokine production, B-cell activation and antibody production, and fibroblast proliferation and collagen production. Promotes Th17 differentiation of T-cells. Synergizes with IL12/interleukin-12 to induce IFNG synthesis from T-helper 1 (Th1) cells. Plays a role in angiogenesis by inducing VEGF production synergistically with TNF and IL6. Involved in transduction of inflammation downstream of pyroptosis: its mature form is specifically released in the extracellular milieu by passing through the gasdermin-D (GSDMD) pore. This Rattus norvegicus (Rat) protein is Interleukin-1 beta.